A 156-amino-acid chain; its full sequence is Small ribosomal subunit protein uS7 (156 aa).

It belongs to the universal ribosomal protein uS7 family. In terms of assembly, part of the 30S ribosomal subunit. Contacts proteins S9 and S11.

In terms of biological role, one of the primary rRNA binding proteins, it binds directly to 16S rRNA where it nucleates assembly of the head domain of the 30S subunit. Is located at the subunit interface close to the decoding center, probably blocks exit of the E-site tRNA. The polypeptide is Small ribosomal subunit protein uS7 (Bacillus cereus (strain ZK / E33L)).